The chain runs to 62 residues: Large ribosomal subunit protein eL37 (62 aa).

Positions 20, 23, 35, and 38 each coordinate Zn(2+). Residues 20–38 (CRRCGRHAFNVAKGYCAAC) form a C4-type zinc finger.

The protein belongs to the eukaryotic ribosomal protein eL37 family. It depends on Zn(2+) as a cofactor.

Functionally, binds to the 23S rRNA. This chain is Large ribosomal subunit protein eL37, found in Staphylothermus marinus (strain ATCC 43588 / DSM 3639 / JCM 9404 / F1).